The chain runs to 509 residues: 2-isopropylmalate synthase (509 aa).

Positions 5-267 (IQIFDTTLRD…QTALNLEETK (263 aa)) constitute a Pyruvate carboxyltransferase domain. Positions 14, 202, 204, and 238 each coordinate Mn(2+). Positions 391 to 509 (KLETLQLQYV…AAENVEKVGN (119 aa)) are regulatory domain.

This sequence belongs to the alpha-IPM synthase/homocitrate synthase family. LeuA type 1 subfamily. As to quaternary structure, homodimer. It depends on Mn(2+) as a cofactor.

The protein localises to the cytoplasm. The enzyme catalyses 3-methyl-2-oxobutanoate + acetyl-CoA + H2O = (2S)-2-isopropylmalate + CoA + H(+). It participates in amino-acid biosynthesis; L-leucine biosynthesis; L-leucine from 3-methyl-2-oxobutanoate: step 1/4. Functionally, catalyzes the condensation of the acetyl group of acetyl-CoA with 3-methyl-2-oxobutanoate (2-ketoisovalerate) to form 3-carboxy-3-hydroxy-4-methylpentanoate (2-isopropylmalate). This chain is 2-isopropylmalate synthase, found in Staphylococcus aureus (strain Mu3 / ATCC 700698).